The primary structure comprises 430 residues: Lipoyl synthase, mitochondrial (430 aa).

A mitochondrion-targeting transit peptide spans 1-37 (MAASTGKLRTLFSAHSSLSARPSSALPALRLTILRSY). Over residues 40 to 56 (TTPPDSSISDPSNSSTT) the composition is skewed to low complexity. Residues 40–63 (TTPPDSSISDPSNSSTTVKRPPTA) form a disordered region. Cys-141, Cys-146, Cys-152, Cys-172, Cys-176, Cys-179, and Ser-387 together coordinate [4Fe-4S] cluster. The region spanning 155–376 (GSSKSAATAT…KERALEMGFL (222 aa)) is the Radical SAM core domain.

It belongs to the radical SAM superfamily. Lipoyl synthase family. Requires [4Fe-4S] cluster as cofactor.

Its subcellular location is the mitochondrion. The catalysed reaction is [[Fe-S] cluster scaffold protein carrying a second [4Fe-4S](2+) cluster] + N(6)-octanoyl-L-lysyl-[protein] + 2 oxidized [2Fe-2S]-[ferredoxin] + 2 S-adenosyl-L-methionine + 4 H(+) = [[Fe-S] cluster scaffold protein] + N(6)-[(R)-dihydrolipoyl]-L-lysyl-[protein] + 4 Fe(3+) + 2 hydrogen sulfide + 2 5'-deoxyadenosine + 2 L-methionine + 2 reduced [2Fe-2S]-[ferredoxin]. It functions in the pathway protein modification; protein lipoylation via endogenous pathway; protein N(6)-(lipoyl)lysine from octanoyl-[acyl-carrier-protein]: step 2/2. Catalyzes the radical-mediated insertion of two sulfur atoms into the C-6 and C-8 positions of the octanoyl moiety bound to the lipoyl domains of lipoate-dependent enzymes, thereby converting the octanoylated domains into lipoylated derivatives. In Ajellomyces dermatitidis (strain ER-3 / ATCC MYA-2586) (Blastomyces dermatitidis), this protein is Lipoyl synthase, mitochondrial.